We begin with the raw amino-acid sequence, 480 residues long: Sestrin-2 (480 aa).

The residue at position 1 (M1) is an N-acetylmethionine. Positions 20–43 are disordered; that stretch reads RGGVAGPETREEHREGQARRGSRG. Positions 27 to 37 are enriched in basic and acidic residues; it reads ETREEHREGQA. The N-terminal domain; mediates the alkylhydroperoxide reductase activity stretch occupies residues 66 to 239; sequence GLEALMSSGR…APSPPSEQGT (174 aa). The active-site Cysteine sulfenic acid (-SOH) intermediate is the C125. Residue K175 forms a Glycyl lysine isopeptide (Lys-Gly) (interchain with G-Cter in ubiquitin) linkage. Disordered stretches follow at residues 221 to 251 and 272 to 291; these read DAEG…NSGG and LLRD…ELEK. Over residues 223 to 238 the composition is skewed to low complexity; the sequence is EGSPASQAPSPPSEQG. A Phosphoserine modification is found at S249. The segment at 308 to 480 is C-terminal domain; mediates TORC1 regulation; the sequence is PHPDILCFVE…ALRAITRYMT (173 aa). L-leucine contacts are provided by residues 374-377, T386, and E451; that span reads TYNT.

Belongs to the sestrin family. In terms of assembly, interacts with the GATOR2 complex which is composed of MIOS, SEC13, SEH1L, WDR24 and WDR59; the interaction is negatively regulated by leucine. Conveys leucine availability via direct interaction with SEH1L and WDR24 components of the GATOR2 complex. Interacts with RRAGA, RRAGB, RRAGC and RRAGD; may function as a guanine nucleotide dissociation inhibitor for RRAGs and regulate them. May interact with the TORC2 complex. Interacts with KEAP1, RBX1, SQSTM and ULK1; to regulate the degradation of KEAP1. May also associate with the complex composed of TSC1, TSC2 and the AMP-responsive protein kinase/AMPK to regulate TORC1 signaling. May interact with PRDX1. Post-translationally, phosphorylated by ULK1 at multiple sites. Ubiquitinated at Lys-175 by RNF167 via 'Lys-63'-linked polyubiquitination in response to leucine deprivation: ubiquitination promotes SESN2-interaction with the GATOR2 complex, leading to inhibit the TORC1 signaling pathway. Deubiquitinated at Lys-175 by STAMBPL1, promoting the TORC1 signaling pathway. Ubiquitinated by RNF186; ubiquitination mediates proteasomal degradation. In terms of tissue distribution, detected in heart, liver and skeletal muscles (at protein level).

The protein resides in the cytoplasm. The enzyme catalyses a hydroperoxide + L-cysteinyl-[protein] = S-hydroxy-L-cysteinyl-[protein] + an alcohol. Functionally, functions as an intracellular leucine sensor that negatively regulates the mTORC1 signaling pathway through the GATOR complex. In absence of leucine, binds the GATOR subcomplex GATOR2 and prevents mTORC1 signaling. Binding of leucine to SESN2 disrupts its interaction with GATOR2 thereby activating the TORC1 signaling pathway. This stress-inducible metabolic regulator also plays a role in protection against oxidative and genotoxic stresses. May negatively regulate protein translation in response to endoplasmic reticulum stress, via mTORC1. May positively regulate the transcription by NFE2L2 of genes involved in the response to oxidative stress by facilitating the SQSTM1-mediated autophagic degradation of KEAP1. May also mediate TP53 inhibition of TORC1 signaling upon genotoxic stress. Moreover, may prevent the accumulation of reactive oxygen species (ROS) through the alkylhydroperoxide reductase activity born by the N-terminal domain of the protein. Was originally reported to contribute to oxidative stress resistance by reducing PRDX1. However, this could not be confirmed. In Mus musculus (Mouse), this protein is Sestrin-2.